The primary structure comprises 194 residues: NADH-quinone oxidoreductase subunit B (194 aa).

Residues Cys-73, Cys-74, Cys-138, and Cys-168 each coordinate [4Fe-4S] cluster.

This sequence belongs to the complex I 20 kDa subunit family. NDH-1 is composed of 14 different subunits. Subunits NuoB, C, D, E, F, and G constitute the peripheral sector of the complex. It depends on [4Fe-4S] cluster as a cofactor.

The protein resides in the cell inner membrane. It carries out the reaction a quinone + NADH + 5 H(+)(in) = a quinol + NAD(+) + 4 H(+)(out). NDH-1 shuttles electrons from NADH, via FMN and iron-sulfur (Fe-S) centers, to quinones in the respiratory chain. The immediate electron acceptor for the enzyme in this species is believed to be ubiquinone. Couples the redox reaction to proton translocation (for every two electrons transferred, four hydrogen ions are translocated across the cytoplasmic membrane), and thus conserves the redox energy in a proton gradient. In Bradyrhizobium sp. (strain BTAi1 / ATCC BAA-1182), this protein is NADH-quinone oxidoreductase subunit B.